A 479-amino-acid polypeptide reads, in one-letter code: Adenosylhomocysteinase (479 aa).

Positions 56, 133, and 199 each coordinate substrate. Thr-200–Thr-202 provides a ligand contact to NAD(+). Positions 229 and 233 each coordinate substrate. Residues Asn-234, Gly-263–Gly-268, Glu-286, Asn-321, Ile-342–His-344, and Asn-390 each bind NAD(+).

It belongs to the adenosylhomocysteinase family. In terms of assembly, homotetramer. NAD(+) is required as a cofactor.

It carries out the reaction S-adenosyl-L-homocysteine + H2O = L-homocysteine + adenosine. The protein operates within amino-acid biosynthesis; L-homocysteine biosynthesis; L-homocysteine from S-adenosyl-L-homocysteine: step 1/1. Its function is as follows. Adenosylhomocysteine is a competitive inhibitor of S-adenosyl-L-methionine-dependent methyl transferase reactions; therefore adenosylhomocysteinase may play a key role in the control of methylations via regulation of the intracellular concentration of adenosylhomocysteine. The protein is Adenosylhomocysteinase of Plasmodium chabaudi chabaudi.